We begin with the raw amino-acid sequence, 372 residues long: Probable G-protein coupled receptor 45 (372 aa).

The Extracellular segment spans residues 1-38; sequence MACNSTSLEAYTYLLLNTSNASDSGSTQLPAPLRISLA. N-linked (GlcNAc...) asparagine glycans are attached at residues N4, N17, and N20. A helical membrane pass occupies residues 39 to 59; that stretch reads IVMLLMTVVGFLGNTVVCIIV. Over 60 to 75 the chain is Cytoplasmic; that stretch reads YQRPAMRSAINLLLAT. Residues 76 to 96 traverse the membrane as a helical segment; it reads LAFSDIMLSLCCMPFTAVTLI. The Extracellular portion of the chain corresponds to 97-109; it reads TVRWHFGDHFCRL. Residues 110–130 traverse the membrane as a helical segment; the sequence is SATLYWFFVLEGVAILLIISV. The Cytoplasmic segment spans residues 131–149; that stretch reads DRFLIIVQRQDKLNPRRAK. The chain crosses the membrane as a helical span at residues 150–170; that stretch reads VIIAVSWVLSFCIAGPSLTGW. Residues 171–198 are Extracellular-facing; sequence TLVEVPARAPQCVLGYTELPADRAYVVT. The chain crosses the membrane as a helical span at residues 199-219; sequence LVVAVFFAPFGVMLCAYMCIL. The Cytoplasmic portion of the chain corresponds to 220 to 268; it reads NTVRKNAVRVHNQSDSLDLRQLTRAGLRRLQRQQQVSVDLSFKTKAFTT. A helical transmembrane segment spans residues 269-289; the sequence is ILILFVGFSLCWLPHSVYSLL. At 290–305 the chain is on the extracellular side; sequence SVFSQRFYCGSSFYAT. A helical transmembrane segment spans residues 306–326; the sequence is STCVLWLSYLKSVFNPIVYCW. Residues 327 to 372 are Cytoplasmic-facing; it reads RIKKFREACIELLPQTFQILPKVPERIRRRIQPSTVYVCNENQSAV.

It belongs to the G-protein coupled receptor 1 family. Expressed in brain; detected in the basal forebrain, frontal cortex, and caudate, but not in thalamus, hippocampus, or putamen.

The protein localises to the cell membrane. Orphan receptor. May play a role in brain function. The chain is Probable G-protein coupled receptor 45 (GPR45) from Homo sapiens (Human).